Reading from the N-terminus, the 983-residue chain is Bifunctional glutamine synthetase adenylyltransferase/adenylyl-removing enzyme (983 aa).

Positions 1 to 468 (MTVENAKALF…KQYAALFAQA (468 aa)) are adenylyl removase. Positions 473–983 (AASGNLVFTG…FDKLVGHGAD (511 aa)) are adenylyl transferase.

It belongs to the GlnE family. Requires Mg(2+) as cofactor.

It catalyses the reaction [glutamine synthetase]-O(4)-(5'-adenylyl)-L-tyrosine + phosphate = [glutamine synthetase]-L-tyrosine + ADP. The catalysed reaction is [glutamine synthetase]-L-tyrosine + ATP = [glutamine synthetase]-O(4)-(5'-adenylyl)-L-tyrosine + diphosphate. Functionally, involved in the regulation of glutamine synthetase GlnA, a key enzyme in the process to assimilate ammonia. When cellular nitrogen levels are high, the C-terminal adenylyl transferase (AT) inactivates GlnA by covalent transfer of an adenylyl group from ATP to specific tyrosine residue of GlnA, thus reducing its activity. Conversely, when nitrogen levels are low, the N-terminal adenylyl removase (AR) activates GlnA by removing the adenylyl group by phosphorolysis, increasing its activity. The regulatory region of GlnE binds the signal transduction protein PII (GlnB) which indicates the nitrogen status of the cell. This is Bifunctional glutamine synthetase adenylyltransferase/adenylyl-removing enzyme from Brucella suis biovar 1 (strain 1330).